Consider the following 333-residue polypeptide: Tubulin alpha chain (333 aa).

GTP contacts are provided by serine 48, glycine 52, threonine 53, threonine 88, asparagine 115, and asparagine 137.

It belongs to the tubulin family. Dimer of alpha and beta chains. A typical microtubule is a hollow water-filled tube with an outer diameter of 25 nm and an inner diameter of 15 nM. Alpha-beta heterodimers associate head-to-tail to form protofilaments running lengthwise along the microtubule wall with the beta-tubulin subunit facing the microtubule plus end conferring a structural polarity. Microtubules usually have 13 protofilaments but different protofilament numbers can be found in some organisms and specialized cells. Mg(2+) is required as a cofactor. Undergoes a tyrosination/detyrosination cycle, the cyclic removal and re-addition of a C-terminal tyrosine residue by the enzymes tubulin tyrosine carboxypeptidase (TTCP) and tubulin tyrosine ligase (TTL), respectively.

It localises to the cytoplasm. The protein localises to the cytoskeleton. It carries out the reaction GTP + H2O = GDP + phosphate + H(+). Tubulin is the major constituent of microtubules, a cylinder consisting of laterally associated linear protofilaments composed of alpha- and beta-tubulin heterodimers. Microtubules grow by the addition of GTP-tubulin dimers to the microtubule end, where a stabilizing cap forms. Below the cap, tubulin dimers are in GDP-bound state, owing to GTPase activity of alpha-tubulin. The polypeptide is Tubulin alpha chain (tuba) (Dictyostelium purpureum (Slime mold)).